We begin with the raw amino-acid sequence, 300 residues long: Ribosomal RNA small subunit methyltransferase H (300 aa).

S-adenosyl-L-methionine-binding positions include 35 to 37 (GGH), Asp-55, Phe-82, Asp-100, and Gln-107.

The protein belongs to the methyltransferase superfamily. RsmH family.

It localises to the cytoplasm. The catalysed reaction is cytidine(1402) in 16S rRNA + S-adenosyl-L-methionine = N(4)-methylcytidine(1402) in 16S rRNA + S-adenosyl-L-homocysteine + H(+). Functionally, specifically methylates the N4 position of cytidine in position 1402 (C1402) of 16S rRNA. The chain is Ribosomal RNA small subunit methyltransferase H from Chlamydia trachomatis serovar L2 (strain ATCC VR-902B / DSM 19102 / 434/Bu).